The chain runs to 256 residues: Small ribosomal subunit protein eS1 (256 aa).

Over residues 1–18 (MAVGKNKRLSKGKKGVKK) the composition is skewed to basic residues. The interval 1–21 (MAVGKNKRLSKGKKGVKKRTV) is disordered. The residue at position 2 (Ala-2) is an N-acetylalanine; partial.

Belongs to the eukaryotic ribosomal protein eS1 family. In terms of assembly, component of the small ribosomal subunit. Mature ribosomes consist of a small (40S) and a large (60S) subunit. The 40S subunit contains about 33 different proteins and 1 molecule of RNA (18S). The 60S subunit contains about 49 different proteins and 3 molecules of RNA (25S, 5.8S and 5S).

It is found in the cytoplasm. In Neosartorya fischeri (strain ATCC 1020 / DSM 3700 / CBS 544.65 / FGSC A1164 / JCM 1740 / NRRL 181 / WB 181) (Aspergillus fischerianus), this protein is Small ribosomal subunit protein eS1 (rps1).